A 190-amino-acid polypeptide reads, in one-letter code: Potassium-transporting ATPase KdpC subunit (190 aa).

A helical transmembrane segment spans residues 10–30; the sequence is VLLLVLTGLTGFAYPLLSTAI.

Belongs to the KdpC family. In terms of assembly, the system is composed of three essential subunits: KdpA, KdpB and KdpC.

The protein resides in the cell inner membrane. In terms of biological role, part of the high-affinity ATP-driven potassium transport (or Kdp) system, which catalyzes the hydrolysis of ATP coupled with the electrogenic transport of potassium into the cytoplasm. This subunit acts as a catalytic chaperone that increases the ATP-binding affinity of the ATP-hydrolyzing subunit KdpB by the formation of a transient KdpB/KdpC/ATP ternary complex. The protein is Potassium-transporting ATPase KdpC subunit of Sorangium cellulosum (strain So ce56) (Polyangium cellulosum (strain So ce56)).